A 248-amino-acid polypeptide reads, in one-letter code: tRNA pseudouridine synthase A 2 (248 aa).

D55 acts as the Nucleophile in catalysis. Position 113 (Y113) interacts with substrate.

It belongs to the tRNA pseudouridine synthase TruA family. In terms of assembly, homodimer.

The catalysed reaction is uridine(38/39/40) in tRNA = pseudouridine(38/39/40) in tRNA. Formation of pseudouridine at positions 38, 39 and 40 in the anticodon stem and loop of transfer RNAs. The protein is tRNA pseudouridine synthase A 2 of Clostridium tetani (strain Massachusetts / E88).